The sequence spans 333 residues: B3 domain-containing transcription factor NGA4 (333 aa).

Residues 36–145 constitute a DNA-binding region (TF-B3); the sequence is FDKVLTPSDV…KIMFIDWRPR (110 aa). Residues 268–333 are disordered; the sequence is VEESSSSGDT…YKRKGKSLEL (66 aa). Residues 323-333 show a composition bias toward basic and acidic residues; the sequence is EYKRKGKSLEL.

The protein localises to the nucleus. Its function is as follows. Regulates lateral organ growth. Functionally redundant with NGA1, NGA2 and NGA3. The protein is B3 domain-containing transcription factor NGA4 (NGA4) of Arabidopsis thaliana (Mouse-ear cress).